Consider the following 162-residue polypeptide: SsrA-binding protein (162 aa).

This sequence belongs to the SmpB family.

It is found in the cytoplasm. Its function is as follows. Required for rescue of stalled ribosomes mediated by trans-translation. Binds to transfer-messenger RNA (tmRNA), required for stable association of tmRNA with ribosomes. tmRNA and SmpB together mimic tRNA shape, replacing the anticodon stem-loop with SmpB. tmRNA is encoded by the ssrA gene; the 2 termini fold to resemble tRNA(Ala) and it encodes a 'tag peptide', a short internal open reading frame. During trans-translation Ala-aminoacylated tmRNA acts like a tRNA, entering the A-site of stalled ribosomes, displacing the stalled mRNA. The ribosome then switches to translate the ORF on the tmRNA; the nascent peptide is terminated with the 'tag peptide' encoded by the tmRNA and targeted for degradation. The ribosome is freed to recommence translation, which seems to be the essential function of trans-translation. This is SsrA-binding protein from Granulibacter bethesdensis (strain ATCC BAA-1260 / CGDNIH1).